A 178-amino-acid chain; its full sequence is ATP-dependent protease subunit HslV (178 aa).

Residue Thr7 is part of the active site. Positions 162, 165, and 168 each coordinate Na(+).

Belongs to the peptidase T1B family. HslV subfamily. As to quaternary structure, a double ring-shaped homohexamer of HslV is capped on each side by a ring-shaped HslU homohexamer. The assembly of the HslU/HslV complex is dependent on binding of ATP.

It localises to the cytoplasm. It carries out the reaction ATP-dependent cleavage of peptide bonds with broad specificity.. Its activity is regulated as follows. Allosterically activated by HslU binding. In terms of biological role, protease subunit of a proteasome-like degradation complex believed to be a general protein degrading machinery. This Janthinobacterium sp. (strain Marseille) (Minibacterium massiliensis) protein is ATP-dependent protease subunit HslV.